A 67-amino-acid polypeptide reads, in one-letter code: Ceratotoxin-C (67 aa).

Positions methionine 1–alanine 23 are cleaved as a signal peptide. Residues glutamate 24–arginine 35 constitute a propeptide that is removed on maturation.

Homomer of four to six subunits.

It is found in the secreted. Functionally, female-specific peptides with potent activity against Gram-positive and Gram-negative bacteria. They have as well hemolytic activity. The chain is Ceratotoxin-C (CTXC1) from Ceratitis capitata (Mediterranean fruit fly).